Reading from the N-terminus, the 251-residue chain is Esterase mlcF (251 aa).

Active-site charge relay system residues include Ser126, Asp193, and His221.

This sequence belongs to the LovG family.

The enzyme catalyses dihydro-ML-236C-[compactin nonaketide synthase] + H2O = holo-[compactin nonaketide synthase] + dihydro-ML-236C carboxylate + H(+). It functions in the pathway polyketide biosynthesis. Functionally, esterase; part of the gene cluster that mediates the biosynthesis of compactin, also known as mevastatin or ML-236B, and which acts as a potent competitive inhibitor of HMG-CoA reductase. Compactin biosynthesis is performed in two stages. The first stage is catalyzed by the nonaketide synthase mlcA, which belongs to type I polyketide synthases and catalyzes the iterative nine-step formation of the polyketide. This PKS stage is completed by the action of dehydrogenase mlcG, which catalyzes the NADPH-dependent reduction of the unsaturated tetra-, penta- and heptaketide intermediates that arise during the mlcA-mediated biosynthesis of the nonaketide chain and leads to dihydro-ML-236C carboxylate. Covalently bound dihydro-ML-236C carboxylate is released from mlcA by the mlcF esterase. Conversion of dihydro-ML-236C carboxylate into ML-236A carboxylate is subsequently performed with the participation of molecular oxygen and P450 monoogygenase mlcC. Finally, mlcH performs the conversion of ML-236A carboxylate to ML-236B/compactin carboxylate through the addition of the side-chain diketide moiety produced by the diketide synthase mlcB. This is Esterase mlcF from Penicillium citrinum.